A 243-amino-acid polypeptide reads, in one-letter code: MKQLWLDIGNTRLKYWITQNETVIEHAAELHLQSPSDLLLGLIQHFNHQNIQKVGVSSVLDQHNNDRIRSILKRLHIPMIMAKVHQEYAALRCGYDHPEQLGIDRWLQVLAVAQPDRNVCVIGCGTALTIDLVKGYQHLGGYILPNLYLQRDALIQNTKGIKIPDSAFDDLEPGHNTIDAVHHGILLGLVSTIQTIMQQSPQQLVLTGGDAPLFAKFLQPYHPQIEPDLLLKGLQHYVRHQLP.

Residue 7 to 14 (DIGNTRLK) coordinates ATP. Substrate is bound by residues Y95 and 102-105 (GIDR). The active-site Proton acceptor is the D104. T126 lines the ATP pocket. T177 serves as a coordination point for substrate.

This sequence belongs to the type III pantothenate kinase family. Homodimer. NH4(+) is required as a cofactor. It depends on K(+) as a cofactor.

The protein localises to the cytoplasm. It carries out the reaction (R)-pantothenate + ATP = (R)-4'-phosphopantothenate + ADP + H(+). Its pathway is cofactor biosynthesis; coenzyme A biosynthesis; CoA from (R)-pantothenate: step 1/5. Catalyzes the phosphorylation of pantothenate (Pan), the first step in CoA biosynthesis. The chain is Type III pantothenate kinase from Acinetobacter baylyi (strain ATCC 33305 / BD413 / ADP1).